Consider the following 451-residue polypeptide: Tubulin alpha-1/alpha-2 chain (451 aa).

Residue Q11 coordinates GTP. Position 40 is an N6-acetyllysine (K40). 6 residues coordinate GTP: E71, G144, T145, T179, N206, and N228. A Mg(2+)-binding site is contributed by E71. Residue E254 is part of the active site.

It belongs to the tubulin family. Dimer of alpha and beta chains. A typical microtubule is a hollow water-filled tube with an outer diameter of 25 nm and an inner diameter of 15 nM. Alpha-beta heterodimers associate head-to-tail to form protofilaments running lengthwise along the microtubule wall with the beta-tubulin subunit facing the microtubule plus end conferring a structural polarity. Microtubules usually have 13 protofilaments but different protofilament numbers can be found in some organisms and specialized cells. Requires Mg(2+) as cofactor. In terms of processing, undergoes a tyrosination/detyrosination cycle, the cyclic removal and re-addition of a C-terminal tyrosine residue by the enzymes tubulin tyrosine carboxypeptidase (TTCP) and tubulin tyrosine ligase (TTL), respectively. Acetylation of alpha chains at Lys-40 stabilizes microtubules and affects affinity and processivity of microtubule motors. This modification has a role in multiple cellular functions, ranging from cell motility, cell cycle progression or cell differentiation to intracellular trafficking and signaling.

Its subcellular location is the cytoplasm. It is found in the cytoskeleton. It catalyses the reaction GTP + H2O = GDP + phosphate + H(+). Its function is as follows. Tubulin is the major constituent of microtubules, a cylinder consisting of laterally associated linear protofilaments composed of alpha- and beta-tubulin heterodimers. Microtubules grow by the addition of GTP-tubulin dimers to the microtubule end, where a stabilizing cap forms. Below the cap, tubulin dimers are in GDP-bound state, owing to GTPase activity of alpha-tubulin. The protein is Tubulin alpha-1/alpha-2 chain (TUBA1) of Volvox carteri (Green alga).